A 365-amino-acid polypeptide reads, in one-letter code: Aminomethyltransferase (365 aa).

The protein belongs to the GcvT family. The glycine cleavage system is composed of four proteins: P, T, L and H.

It carries out the reaction N(6)-[(R)-S(8)-aminomethyldihydrolipoyl]-L-lysyl-[protein] + (6S)-5,6,7,8-tetrahydrofolate = N(6)-[(R)-dihydrolipoyl]-L-lysyl-[protein] + (6R)-5,10-methylene-5,6,7,8-tetrahydrofolate + NH4(+). Its function is as follows. The glycine cleavage system catalyzes the degradation of glycine. The protein is Aminomethyltransferase of Yersinia pseudotuberculosis serotype O:1b (strain IP 31758).